A 427-amino-acid polypeptide reads, in one-letter code: Endothelin-1 receptor (427 aa).

A signal peptide spans 1-20; that stretch reads MSIFCLAAYFWLTMVGGVMA. Residues 21-80 lie on the Extracellular side of the membrane; it reads DNPERYSANLSSHMEDFTPFPGTEINFLGTTHRPPNLALPSNGSMHGYCPQQTKITTAFK. 2 N-linked (GlcNAc...) asparagine glycosylation sites follow: Asn29 and Asn62. The chain crosses the membrane as a helical span at residues 81–102; that stretch reads YINTVISCTIFIVGMVGNATLL. Residues 103 to 112 lie on the Cytoplasmic side of the membrane; that stretch reads RIIYQNKCMR. Residues 113-132 form a helical membrane-spanning segment; sequence NGPNALIASLALGDLIYVVI. Residues 133-159 lie on the Extracellular side of the membrane; that stretch reads DLPINVFKLLAGRWPFDHNDFGVFLCK. A disulfide bond links Cys158 and Cys239. A helical transmembrane segment spans residues 160 to 181; it reads LFPFLQKSSVGITVLNLCALSV. At 182-205 the chain is on the cytoplasmic side; that stretch reads DRYRAVASWSRVQGIGIPLITAIE. Residues 206-229 form a helical membrane-spanning segment; it reads IVSIWILSFILAIPEAIGFVMVPF. Topologically, residues 230-256 are extracellular; that stretch reads EYKGELHRTCMLNATSKFMEFYQDVKD. N-linked (GlcNAc...) asparagine glycosylation is present at Asn242. Residues 257–278 form a helical membrane-spanning segment; the sequence is WWLFGFYFCMPLVCTAIFYTLM. Topologically, residues 279–306 are cytoplasmic; it reads TCEMLNRRNGSLRIALSEHLKQRREVAK. A helical membrane pass occupies residues 307 to 328; sequence TVFCLVVIFALCWFPLHLSRIL. Over 329–347 the chain is Extracellular; the sequence is KKTVYDEMDKNRCELLSFL. Residues 348–372 traverse the membrane as a helical segment; that stretch reads LLMDYIGINLATMNSCINPIALYFV. At 373–427 the chain is on the cytoplasmic side; sequence SKKFKNCFQSCLCCCCHQSKSLMTSVPMNGTSIQWKNQEQNNHNTERSSHKDSMN. Positions 408-427 are disordered; the sequence is KNQEQNNHNTERSSHKDSMN. Basic and acidic residues predominate over residues 416–427; the sequence is NTERSSHKDSMN. Ser425 is modified (phosphoserine).

Belongs to the G-protein coupled receptor 1 family. Endothelin receptor subfamily. EDNRA sub-subfamily. In terms of assembly, interacts with HDAC7 and KAT5.

The protein localises to the cell membrane. In terms of biological role, receptor for endothelin-1. Mediates its action by association with G proteins that activate a phosphatidylinositol-calcium second messenger system. The rank order of binding affinities for ET-A is: ET1 &gt; ET2 &gt;&gt; ET3. The sequence is that of Endothelin-1 receptor from Mus musculus (Mouse).